Reading from the N-terminus, the 210-residue chain is MARALLGTKVGMTQIWSGRRVVPVTAVAVTTNVVSQVKAPEKDGYSRLQIATGAIDPRRVNRPRKGHFAKAGLTPRRFIREVDSEGSLGDEFGPEIFQEGQLVDVVGKSKGKGFSGTMKRHNFQGVSATHGSHRNHRKPGSVGASSTPSRVFKGTRMAGRLGSSRVTVHNLRLVKIDSENGLLLVEGAVPGSSGSPVIIRDAVKGVPIVS.

A disordered region spans residues 126 to 150 (VSATHGSHRNHRKPGSVGASSTPSR).

The protein belongs to the universal ribosomal protein uL3 family. As to quaternary structure, part of the 50S ribosomal subunit. Forms a cluster with proteins L14 and L19.

One of the primary rRNA binding proteins, it binds directly near the 3'-end of the 23S rRNA, where it nucleates assembly of the 50S subunit. The sequence is that of Large ribosomal subunit protein uL3 from Tropheryma whipplei (strain TW08/27) (Whipple's bacillus).